The primary structure comprises 240 residues: Adapter protein MecA (240 aa).

Belongs to the MecA family. Homodimer.

In terms of biological role, enables the recognition and targeting of unfolded and aggregated proteins to the ClpC protease or to other proteins involved in proteolysis. This chain is Adapter protein MecA, found in Streptococcus mutans serotype c (strain ATCC 700610 / UA159).